A 61-amino-acid polypeptide reads, in one-letter code: Potassium channel toxin alpha-KTx 3.18 (61 aa).

A signal peptide spans 1–23 (MKMFFTVLVTLFVCSMIIGICEG). 3 disulfides stabilise this stretch: Cys-30-Cys-50, Cys-36-Cys-55, and Cys-40-Cys-57. At Lys-60 the chain carries Lysine amide.

In terms of tissue distribution, expressed by the venom gland.

It is found in the secreted. Functionally, inhibits voltage-gated potassium channel rKv1.1/KCNA1 at nanomolar ranges (IC(50)=90 +-2 nM, reduction of current by 30% at 50 nM or toxin). This is Potassium channel toxin alpha-KTx 3.18 from Mesobuthus eupeus (Lesser Asian scorpion).